We begin with the raw amino-acid sequence, 1119 residues long: Nuclear matrix constituent protein 1 (1119 aa).

Coiled coils occupy residues 140 to 226 (LAEL…LYQQ) and 328 to 488 (LQNR…LDER). Disordered regions lie at residues 846-884 (LDVEDSQQSDVRAGNRKPGKRAKGRVRRKRSAKEVAEEA), 903-974 (LASA…PTGR), 989-1015 (NGALSDPNKGKEKEIDDGGGIGEEIPD), and 1046-1109 (GINA…EVSM). 2 stretches are compositionally biased toward basic residues: residues 859 to 876 (GNRKPGKRAKGRVRRKRS) and 920 to 929 (KRTRNSRKRN). The span at 1075-1085 (TPEQSRGYQNQ) shows a compositional bias: polar residues.

The protein belongs to the CRWN family.

The protein resides in the nucleus matrix. It is found in the nucleus lamina. Architectural component of nuclear structure that plays different roles in controlling nuclear size and morphology. This is Nuclear matrix constituent protein 1 from Daucus carota subsp. sativus (Carrot).